The primary structure comprises 385 residues: Leucine aminopeptidase 1 (385 aa).

Positions 1–14 (MKFLTLALSATATA) are cleaved as a signal peptide. The propeptide occupies 15-85 (MIIVNPEQQP…YGTLHTTRVV (71 aa)). Zn(2+) contacts are provided by histidine 185, aspartate 204, glutamate 243, and aspartate 270. A disulfide bond links cysteine 319 and cysteine 323. Position 352 (histidine 352) interacts with Zn(2+).

Belongs to the peptidase M28 family. M28E subfamily. In terms of assembly, monomer. It depends on Zn(2+) as a cofactor.

The protein resides in the secreted. Extracellular aminopeptidase that allows assimilation of proteinaceous substrates. The protein is Leucine aminopeptidase 1 (lap1) of Penicillium rubens (strain ATCC 28089 / DSM 1075 / NRRL 1951 / Wisconsin 54-1255) (Penicillium chrysogenum).